We begin with the raw amino-acid sequence, 4700 residues long: StAR-related lipid transfer protein 9 (4700 aa).

One can recognise a Kinesin motor domain in the interval 3–384 (NVQVAVRVRP…LRYASSAKNI (382 aa)). 103 to 110 (GQTGSGKT) provides a ligand contact to ATP. A compositionally biased stretch (low complexity) spans 310–328 (GDSGILSSPSGTSSGGAPS). The segment at 310-331 (GDSGILSSPSGTSSGGAPSRRQ) is disordered. In terms of domain architecture, FHA spans 498 to 569 (LKEGTTKIGR…LTQGAVITLG (72 aa)). 2 stretches are compositionally biased toward basic and acidic residues: residues 631-646 (QCDE…ETSH) and 867-877 (TSEKTSSEEHL). Disordered stretches follow at residues 631–652 (QCDE…QIQQ), 851–880 (WDPS…LPQA), 1057–1104 (KKSS…SDTD), and 1128–1188 (ERKW…GFTA). Over residues 1134–1146 (PEPENSESDDSQL) the composition is skewed to acidic residues. S1203 bears the Phosphoserine mark. Disordered regions lie at residues 1939 to 1976 (MPGE…EGKN), 2014 to 2043 (ERNP…RVNN), 2088 to 2179 (DQKE…PARD), 2254 to 2290 (ESQV…QEEN), 2377 to 2403 (GVEH…SSEA), 2416 to 2444 (MGSH…SPQD), 2479 to 2539 (LNKV…PRLL), 2589 to 2613 (RVAG…EGEA), 2642 to 2678 (LSAD…RKRR), 2696 to 2731 (SSSS…PVEE), 2765 to 2789 (PQET…PRTL), 2821 to 2852 (VQNS…ASPK), 2892 to 2955 (SKHS…PCRQ), 3124 to 3144 (NAQV…PHTL), 3199 to 3241 (HTCS…GLDG), 3274 to 3412 (SLRQ…MPST), 3564 to 3611 (IALG…KGSA), 3766 to 3790 (SDTS…AEET), 3830 to 3884 (LPSV…RVQK), 3906 to 3991 (ASTQ…SPKL), 4033 to 4086 (PEKV…QHLS), and 4153 to 4193 (PGGL…EWSK). The span at 2088-2100 (DQKEQEKTDHAFR) shows a compositional bias: basic and acidic residues. The span at 2103 to 2118 (SSGNPLPSKDQPSSPR) shows a compositional bias: polar residues. Over residues 2119-2129 (QTDDTVFRDSE) the composition is skewed to basic and acidic residues. A compositionally biased stretch (polar residues) spans 2137–2148 (SIGNHPQVQKIT). A compositionally biased stretch (basic and acidic residues) spans 2153-2169 (RSREGVRESEPVREHTH). Residues 2254-2266 (ESQVAEHVSSSNQ) are compositionally biased toward polar residues. 2 stretches are compositionally biased toward basic and acidic residues: residues 2267-2279 (EEPK…EEMP) and 2379-2391 (EHQD…RSHS). Basic and acidic residues predominate over residues 2500-2510 (QASKPRQKAEK). Residues 2642–2653 (LSADSFESLPNT) are compositionally biased toward polar residues. Low complexity predominate over residues 2712–2729 (PSSADPLAPDSPRSSAPV). Residues 2916-2925 (APCRHPREAL) show a composition bias toward basic and acidic residues. Positions 3124–3141 (NAQVCQTNPEPPATTQGP) are enriched in polar residues. Composition is skewed to polar residues over residues 3274 to 3285 (SLRQNETPQPAA), 3320 to 3339 (SSPT…QELN), and 3368 to 3387 (SGKS…QKAS). Positions 3388–3397 (SRLDDGTTDH) are enriched in basic and acidic residues. Positions 3857 to 3872 (SSPSPSSPHSPGLFPS) are enriched in low complexity. A compositionally biased stretch (polar residues) spans 3906–3924 (ASTQEPGLSPGSLTLSAPS). The segment covering 3958–3975 (LGGSQRGRSSLQRSNGRS) has biased composition (low complexity). Polar residues predominate over residues 4048–4065 (EPSQWQSRTENGGESSAS). Residues 4334-4387 (SDIELMLQDYQQAHEEAKVEIARARDQLRERTEQEKLRIHQKIISQLLKEEDKL) are a coiled coil. Over residues 4397 to 4411 (CTSSNGSLSSGMTSG) the composition is skewed to low complexity. Residues 4397–4419 (CTSSNGSLSSGMTSGYNSSPALS) form a disordered region. Residues 4483–4700 (SYQDLAKHVV…IARLASFLGR (218 aa)) enclose the START domain.

It belongs to the TRAFAC class myosin-kinesin ATPase superfamily. Kinesin family. Interacts with ATAD3A. In terms of tissue distribution, expressed in the central nervous system, muscle cells (heart and skeletal muscle), pancreas, prostate and lung.

The protein resides in the cytoplasm. It is found in the cytoskeleton. Its subcellular location is the microtubule organizing center. It localises to the centrosome. The protein localises to the centriole. The protein resides in the nucleus. In terms of biological role, microtubule-dependent motor protein required for spindle pole assembly during mitosis. Required to stabilize the pericentriolar material (PCM). The sequence is that of StAR-related lipid transfer protein 9 (STARD9) from Homo sapiens (Human).